A 276-amino-acid polypeptide reads, in one-letter code: HTH-type transcriptional activator RhaR (276 aa).

The 99-residue stretch at 174-272 (ESLFSALNQS…SCTPTEYRSR (99 aa)) folds into the HTH araC/xylS-type domain. 2 consecutive DNA-binding regions (H-T-H motif) follow at residues 191–212 (ADFC…KQQT) and 239–262 (VANI…GKTF).

As to quaternary structure, binds DNA as a dimer.

It is found in the cytoplasm. Activates expression of the rhaSR operon in response to L-rhamnose. This chain is HTH-type transcriptional activator RhaR, found in Mannheimia succiniciproducens (strain KCTC 0769BP / MBEL55E).